The sequence spans 375 residues: Growth/differentiation factor 8 (375 aa).

The first 18 residues, 1 to 18 (MQKLQIFVYIYLFMLTVA), serve as a signal peptide directing secretion. Residues 19 to 266 (GPVDLNENSE…VTDTPKRARR (248 aa)) constitute a propeptide that is removed on maturation. 2 N-linked (GlcNAc...) asparagine glycosylation sites follow: asparagine 48 and asparagine 71. Intrachain disulfides connect cysteine 272–cysteine 282, cysteine 281–cysteine 340, cysteine 309–cysteine 372, and cysteine 313–cysteine 374.

The protein belongs to the TGF-beta family. Homodimer; disulfide-linked. Interacts with WFIKKN2, leading to inhibit its activity. Interacts with FSTL3. Post-translationally, synthesized as large precursor molecule that undergoes proteolytic cleavage to generate an N-terminal propeptide and a disulfide linked C-terminal dimer, which is the biologically active molecule. The circulating form consists of a latent complex of the C-terminal dimer and other proteins, including its propeptide, which maintain the C-terminal dimer in a latent, inactive state. Ligand activation requires additional cleavage of the prodomain by a tolloid-like metalloproteinase.

It is found in the secreted. In terms of biological role, acts specifically as a negative regulator of skeletal muscle growth. The polypeptide is Growth/differentiation factor 8 (MSTN) (Sylvicapra grimmia (Grey duiker)).